The sequence spans 37 residues: Large ribosomal subunit protein bL36 (37 aa).

This sequence belongs to the bacterial ribosomal protein bL36 family.

The polypeptide is Large ribosomal subunit protein bL36 (Clostridioides difficile (strain 630) (Peptoclostridium difficile)).